Here is a 198-residue protein sequence, read N- to C-terminus: Alkyl hydroperoxide reductase C (198 aa).

The 162-residue stretch at 2-163 (TLVTQKAPNF…MIRMIDALNF (162 aa)) folds into the Thioredoxin domain. The active-site Cysteine sulfenic acid (-SOH) intermediate is C50.

Belongs to the peroxiredoxin family. AhpC/Prx1 subfamily. In terms of assembly, homodimer; disulfide-linked, upon oxidation. 5 homodimers assemble to form a ring-like decamer.

The protein localises to the cytoplasm. The catalysed reaction is a hydroperoxide + NADH + H(+) = an alcohol + NAD(+) + H2O. In terms of biological role, thiol-specific peroxidase that catalyzes the reduction of hydrogen peroxide and organic hydroperoxides to water and alcohols, respectively. Plays a role in cell protection against oxidative stress by detoxifying peroxides. This chain is Alkyl hydroperoxide reductase C, found in Buchnera aphidicola subsp. Schizaphis graminum (strain Sg).